Reading from the N-terminus, the 544-residue chain is Methionine--tRNA ligase (544 aa).

Residues 10 to 20 (PYANGSLHLGH) carry the 'HIGH' region motif. Cysteine 141, cysteine 144, cysteine 153, and cysteine 156 together coordinate Zn(2+). A 'KMSKS' region motif is present at residues 329–333 (KLSTS). Threonine 332 serves as a coordination point for ATP.

This sequence belongs to the class-I aminoacyl-tRNA synthetase family. MetG type 1 subfamily. As to quaternary structure, monomer. Zn(2+) serves as cofactor.

It localises to the cytoplasm. It catalyses the reaction tRNA(Met) + L-methionine + ATP = L-methionyl-tRNA(Met) + AMP + diphosphate. Functionally, is required not only for elongation of protein synthesis but also for the initiation of all mRNA translation through initiator tRNA(fMet) aminoacylation. This chain is Methionine--tRNA ligase, found in Bacillus cereus (strain AH187).